A 1046-amino-acid polypeptide reads, in one-letter code: SWI/SNF-related matrix-associated actin-dependent regulator of chromatin subfamily A member 1 (1046 aa).

Residues 27–61 (EQPGPSTFKEEGAAAAATEGTTATEKGEKKEKITS) form a disordered region. Positions 39-50 (AAAAATEGTTAT) are enriched in low complexity. Phosphoserine occurs at positions 120 and 123. One can recognise a Helicase ATP-binding domain in the interval 199–364 (ISLYENGVNG…WALLNFLLPD (166 aa)). Position 212–219 (212–219 (DEMGLGKT)) interacts with ATP. The short motif at 315-318 (DEAH) is the DEAH box element. A Helicase C-terminal domain is found at 494-645 (ALDKLLARIK…SIVIQQGRLI (152 aa)). Glycyl lysine isopeptide (Lys-Gly) (interchain with G-Cter in SUMO2) cross-links involve residues K654, K720, and K742. The tract at residues 819–840 (AQREEQKKIDGAEPLTPQETEE) is disordered. A compositionally biased stretch (basic and acidic residues) spans 820 to 829 (QREEQKKIDG). The 53-residue stretch at 847-899 (QGFTNWTKRDFNQFIKANEKYGRDDIDNIAREVEGKSPEEVMEYSAVFWERCN) folds into the SANT 1 domain. Phosphotyrosine is present on Y946. One can recognise an SANT 2 domain in the interval 950 to 1014 (KGKNYTEEED…QRRCNTLISL (65 aa)). Residues 1003 to 1037 (EFQRRCNTLISLIEKENMEIEERERAEKKKRATKT) are a coiled coil. A disordered region spans residues 1025–1046 (RERAEKKKRATKTPMVKFSAFS).

This sequence belongs to the SNF2/RAD54 helicase family. ISWI subfamily. May form homodimers. Component of the ACF-1 ISWI chromatin remodeling complex at least composed of SMARCA1 and BAZ1A, which regulates the spacing of histone octamers on the DNA template to facilitate access to DNA. Within the complex interacts with BAZ1A; the interaction is direct. Component of the WICH-1 ISWI chromatin remodeling complex at least composed of SMARCA1 and BAZ1B/WSTF. Within the complex interacts with BAZ1B/WSTF. Component of the NoRC-1 ISWI chromatin remodeling complex at least composed of SMARCA1 and BAZ2A/TIP5. Within the complex interacts with BAZ2A/TIP5. Component of the BRF-1 ISWI chromatin remodeling complex at least composed of SMARCA1 and BAZ2B. Within the complex interacts with BAZ2B. Component of the NURF-1 ISWI chromatin remodeling complex (also called the nucleosome-remodeling factor (NURF) complex) at least composed of SMARCA1, BPTF, RBBP4 and RBBP7. Within the complex interacts with BPTF. Within the complex interacts with RBBP4 and RBBP7. Component of the CERF-1 ISWI chromatin remodeling complex (also called the CECR2-containing-remodeling factor (CERF) complex) at least composed of CECR2 and SMARCA1. LUZP1 is detected as part of the CERF-1 complex in embryonic stem cells where it is involved in complex stabilization but is not detected in the complex in the testis. Component of the RSF-1 ISWI chromatin remodeling complex at least composed of SMARCA1 and RSF1. Within the complex interacts with RSF1. Interacts with PRLR. Interacts with ERCC6. As to expression, predominantly expressed in cortex, cerebellum, ovaries, testes, uterus and placenta.

Its subcellular location is the nucleus. It catalyses the reaction ATP + H2O = ADP + phosphate + H(+). Its function is as follows. ATPase that possesses intrinsic ATP-dependent chromatin-remodeling activity. ATPase activity is substrate-dependent, and is increased when nucleosomes are the substrate, but is also catalytically active when DNA alone is the substrate. Catalytic subunit of ISWI chromatin-remodeling complexes, which form ordered nucleosome arrays on chromatin and facilitate access to DNA during DNA-templated processes such as DNA replication, transcription, and repair. Within the ISWI chromatin-remodeling complexes, slides edge- and center-positioned histone octamers away from their original location on the DNA template. Catalytic activity and histone octamer sliding propensity is regulated and determined by components of the ISWI chromatin-remodeling complexes. The BAZ1A-, BAZ1B-, BAZ2A- and BAZ2B-containing ISWI chromatin-remodeling complexes regulate the spacing of nucleosomes along the chromatin and have the ability to slide mononucleosomes to the center of a DNA template. The CECR2- and RSF1-containing ISWI chromatin-remodeling complexes do not have the ability to slide mononucleosomes to the center of a DNA template. Within the NURF-1 and CERF-1 ISWI chromatin remodeling complexes, nucleosomes are the preferred substrate for its ATPase activity. Within the NURF-1 ISWI chromatin-remodeling complex, binds to the promoters of En1 and En2 to positively regulate their expression and promote brain development. May promote neurite outgrowth. May be involved in the development of luteal cells. Facilitates nucleosome assembly during DNA replication, ensuring replication fork progression and genomic stability by preventing replication stress and nascent DNA gaps. This Mus musculus (Mouse) protein is SWI/SNF-related matrix-associated actin-dependent regulator of chromatin subfamily A member 1 (Smarca1).